The sequence spans 614 residues: Zinc metalloproteinase-disintegrin-like protein F1 (614 aa).

The first 20 residues, Met1–Ser20, serve as a signal peptide directing secretion. Residues Ile21–Pro192 constitute a propeptide that is removed on maturation. The short motif at Pro167–Thr173 is the Cys-switch; controls maturation element. At Glu193 the chain carries Pyrrolidone carboxylic acid (Glu). The region spanning Lys202–Pro398 is the Peptidase M12B domain. Asn221 is a glycosylation site (N-linked (GlcNAc...) asparagine). Disulfide bonds link Cys313/Cys393, Cys353/Cys377, and Cys355/Cys360. His338 provides a ligand contact to Zn(2+). The short motif at His338 to Asp349 is the Metal-binding element. The active-site Proton acceptor is Glu339. The Zn(2+) site is built by His342 and His348. A Disintegrin domain is found at Pro406–Asn492. Ca(2+)-binding residues include Val408, Asn411, Glu415, Glu418, and Asp421. 14 disulfides stabilise this stretch: Cys409–Cys438, Cys420–Cys433, Cys422–Cys428, Cys432–Cys455, Cys446–Cys452, Cys451–Cys477, Cys464–Cys484, Cys471–Cys503, Cys496–Cys508, Cys515–Cys565, Cys530–Cys575, Cys543–Cys553, Cys560–Cys601, and Cys595–Cys607. Residues Glu470–Asp472 carry the D/ECD-tripeptide motif. Residues Asp472, Glu475, and Asp487 each coordinate Ca(2+). The N-linked (GlcNAc...) asparagine glycan is linked to Asn534.

It belongs to the venom metalloproteinase (M12B) family. P-III subfamily. P-IIIa sub-subfamily. Monomer. Requires Zn(2+) as cofactor. Post-translationally, N-glycosylated. The N-terminus is blocked. In terms of tissue distribution, expressed by the venom gland (at protein level). Expressed by the venom gland.

The protein localises to the secreted. Its activity is regulated as follows. The alpha-fibrinogenase activity is inhibited by EDTA, but not by pefabloc. Functionally, zinc metalloprotease that has fibrinogenolytic activity. Does not have hemorrhagic activity in rats. Cleaves insulin B chain at '38-Ala-|-Leu-39' and '40-Tyr-|-Leu-41' bonds. Hydrolyzes only partially and weakly isolated extracellular matrix (ECM) bovine fibronectin and basal membrane (BM) protein human collagen IV in vitro. Murine laminin is not hydrolyzed, neither isolated nor in a solubilized BM preparation. Nidogen is hydrolyzed at '350-Ser-|-Phe-351' bond in a solubilized BM preparation. Hydrolyzes plasma proteins involved in blood coagulation in vitro. Has alpha-fibrinogenase activity cleaving human fibrinogen alpha chain at '432-Lys-|-Leu-433' bond, but does not cleave beta or gamma chains. Does not cleave fibrin. Hydrolyzes only partially bovine prothrombin at '200-Ser-|-Gly-201' bond, factor X (FX) heavy chain, and very slowly, FX light chain and plasminogen in vitro, without activating any of them. Has no effect in plasma thrombin generation. Does not inhibit platelet aggregation induced by collagen in vitro. May have a delayed pathological action as an anticoagulant in envenomed patients after they received serotherapy as it is not recognized by the venom antiserum. The polypeptide is Zinc metalloproteinase-disintegrin-like protein F1 (Vipera ammodytes ammodytes (Western sand viper)).